Reading from the N-terminus, the 338-residue chain is Fructose-1,6-bisphosphatase 1 (338 aa).

Thr2 bears the N-acetylthreonine mark. AMP contacts are provided by residues 18–22 and 28–32; these read VMEEG and TGEMT. Mg(2+) is bound by residues Asp69 and Glu98. Residue 113–114 coordinates AMP; that stretch reads KY. Asp119, Leu121, and Asp122 together coordinate Mg(2+). A substrate-binding site is contributed by 122-125; that stretch reads DGSS. An AMP-binding site is contributed by Arg141. Lys151 is modified (N6-succinyllysine). The residue at position 208 (Ser208) is a Phosphoserine; by PKA. Substrate-binding positions include 213–216, 244–249, Tyr265, and 275–277; these read NEGY, RYVGSM, and KLR. Phosphotyrosine occurs at positions 216, 245, and 265. Mg(2+) is bound at residue Glu281.

It belongs to the FBPase class 1 family. As to quaternary structure, homotetramer. Mg(2+) serves as cofactor.

It carries out the reaction beta-D-fructose 1,6-bisphosphate + H2O = beta-D-fructose 6-phosphate + phosphate. Its pathway is carbohydrate biosynthesis; gluconeogenesis. With respect to regulation, subject to complex allosteric regulation. The enzyme can assume an active R-state, or an inactive T-state. Intermediate conformations may exist. AMP acts as an allosteric inhibitor. AMP binding affects the turnover of bound substrate and not the affinity for substrate. Fructose 2,6-bisphosphate acts as a competitive inhibitor. Fructose 2,6-bisphosphate and AMP have synergistic effects. Its function is as follows. Catalyzes the hydrolysis of fructose 1,6-bisphosphate to fructose 6-phosphate in the presence of divalent cations, acting as a rate-limiting enzyme in gluconeogenesis. Plays a role in regulating glucose sensing and insulin secretion of pancreatic beta-cells. Appears to modulate glycerol gluconeogenesis in liver. Important regulator of appetite and adiposity; increased expression of the protein in liver after nutrient excess increases circulating satiety hormones and reduces appetite-stimulating neuropeptides and thus seems to provide a feedback mechanism to limit weight gain. This Sus scrofa (Pig) protein is Fructose-1,6-bisphosphatase 1 (FBP1).